A 285-amino-acid polypeptide reads, in one-letter code: Bifunctional protein FolD (285 aa).

Residues 166 to 168 (GAS) and I232 each bind NADP(+).

The protein belongs to the tetrahydrofolate dehydrogenase/cyclohydrolase family. In terms of assembly, homodimer.

It catalyses the reaction (6R)-5,10-methylene-5,6,7,8-tetrahydrofolate + NADP(+) = (6R)-5,10-methenyltetrahydrofolate + NADPH. The enzyme catalyses (6R)-5,10-methenyltetrahydrofolate + H2O = (6R)-10-formyltetrahydrofolate + H(+). Its pathway is one-carbon metabolism; tetrahydrofolate interconversion. The NAD(+)-dependent dehydrogenase is activated by inorganic phosphate. Its function is as follows. Catalyzes the oxidation of 5,10-methylenetetrahydrofolate to 5,10-methenyltetrahydrofolate and then the hydrolysis of 5,10-methenyltetrahydrofolate to 10-formyltetrahydrofolate. This is Bifunctional protein FolD from Photobacterium phosphoreum.